Consider the following 549-residue polypeptide: Cell death protein 4 (549 aa).

In terms of domain architecture, CARD spans 1-91 (MLCEIECRAL…HLADFLEDYI (91 aa)). ATP is bound by residues Tyr131, Gly162, Gly164, Lys165, Ser166, Val167, Arg273, Thr367, and Tyr369. Positions 133–417 (REYHVDRVIK…KLWSCVIPVD (285 aa)) constitute an NB-ARC domain. Ser166 provides a ligand contact to Mg(2+).

As to quaternary structure, associates as an asymmetric homodimer with ced-9. Only one ced-4 molecule within the dimer interacts directly with ced-9. Upon release from ced-9, forms a multimer, known as the apoptosome, and interacts with ced-3; the interaction results in ced-3 autoproteolytic cleavage and activation. Multiple oligomeric states of the apoptosome are observed including hexamers, heptamers and octamers. The hexamers likely represent a pre-mature state of the apoptosome and may contribute to the regulation of ced-3 activation. The apoptosome multimer also interacts with two processed ced-3 to form a stable holoenzyme. Interacts with sex-determining protein fem-1. May form a complex composed of ced-3, ced-4 and mac-1 or of ced-9, ced-4 and mac-1. Within the complex, interacts with mac-1.

It localises to the mitochondrion. The protein resides in the cytoplasm. It is found in the perinuclear region. Its function is as follows. Component of the egl-1, ced-9, ced-4 and ced-3 apoptotic signaling cascade required for the initiation of programmed cell death in cells fated to die during embryonic and postembryonic development. During oogenesis, required for germline apoptosis downstream of ced-9 and upstream of ced-3 but independently of egl-1. May regulate germline apoptosis in response to DNA damage, probably downstream of let-60/ras and mpk-1 pathway. Regulates CEP neuron apoptosis in response to high Al(3+) levels. During male tail morphogenesis, promotes apoptosis of the tail-spike cell upstream of ced-3 but independently of egl-1 and ced-9. May play a role in sex-specific cell apoptosis, probably by promoting ced-3-mediated cleavage of sex-determining protein fem-1. During larval development, required for the elimination of transient presynaptic components downstream of egl-1 and ced-9 and upstream of ced-3 apoptotic pathway. Downstream of calreticulin crt-1 and upstream of ced-3 and independently of egl-1 and ced-9, plays a role in the initial steps of axonal regrowth following axotomy. Together with ain-1, a component of the miRNA-induced-silencing complex (miRISC), and probably upstream of ced-3, regulates temporal cell fate patterning during larval development. May play a role in resistance to S.typhimurium-mediated infection. Functionally, plays a major role in programmed cell death. egl-1 binds to and directly inhibits the activity of ced-9, releasing the cell death activator ced-4 from a ced-9/ced-4-containing protein complex and allowing ced-4 to induce caspase ced-3 autoproteolytic cleavage and activation. Also forms a holoenzyme with processed ced-3 enhancing ced-3 activity. In terms of biological role, prevents programmed cell death. The protein is Cell death protein 4 (ced-4) of Caenorhabditis elegans.